The sequence spans 256 residues: Putative ankyrin repeat protein PAE1861 (256 aa).

8 ANK repeats span residues 1 to 30, 34 to 63, 67 to 92, 93 to 122, 124 to 151, 155 to 184, 188 to 214, and 218 to 245; these read MDCN…SPDV, YGRT…DPNA, EGKT…ASAV, GVEE…RPGA, HGES…DPNA, HGKT…DVNV, AGRT…DLNA, and MGRT…PVPD.

This is Putative ankyrin repeat protein PAE1861 from Pyrobaculum aerophilum (strain ATCC 51768 / DSM 7523 / JCM 9630 / CIP 104966 / NBRC 100827 / IM2).